Consider the following 296-residue polypeptide: Iron-sulfur cluster carrier protein (296 aa).

Residues 1–17 are compositionally biased toward low complexity; it reads MSSNPFRIQNPQPQPQR. The interval 1–23 is disordered; it reads MSSNPFRIQNPQPQPQRQPRDLR. An ATP-binding site is contributed by 52 to 59; the sequence is GKGGVGKS.

Belongs to the Mrp/NBP35 ATP-binding proteins family. Homodimer.

Binds and transfers iron-sulfur (Fe-S) clusters to target apoproteins. Can hydrolyze ATP. The sequence is that of Iron-sulfur cluster carrier protein from Saccharolobus solfataricus (strain ATCC 35092 / DSM 1617 / JCM 11322 / P2) (Sulfolobus solfataricus).